Consider the following 134-residue polypeptide: Neuropeptide-like peptide 11 (134 aa).

A signal peptide spans 1–20; the sequence is MMSTLALVSLAIFGIAVVCA. Residues 21-106 constitute a propeptide that is removed on maturation; the sequence is APKPATVPVA…YNRLIDAGKK (86 aa). An Alanine amide modification is found at Ala-131.

This chain is Neuropeptide-like peptide 11 (nlp-11), found in Caenorhabditis elegans.